A 122-amino-acid polypeptide reads, in one-letter code: Serum amyloid A-2 protein (122 aa).

A signal peptide spans 1–18; the sequence is MKPFLSIIFCFLVLGVDS. Q19 carries the post-translational modification Pyrrolidone carboxylic acid. Residues 100 to 122 form a disordered region; sequence ANEWGRSGKDPNFFRPPGLPSKY.

This sequence belongs to the SAA family. Apolipoprotein of the HDL complex. Expressed by the liver; secreted in plasma.

It is found in the secreted. Major acute phase reactant. The protein is Serum amyloid A-2 protein (SAA2) of Mesocricetus auratus (Golden hamster).